We begin with the raw amino-acid sequence, 286 residues long: MREKTLRSEVLEEFATYLELEGKSKNTIRMYTYFLSKFLEEGYSPTARDALRFLAKLRAKGYSIRSINLVVQALKAYFKFEGLNEEAERLRNPKIPKTLPKSLTEEEVKKLIEVIPKDKIRDRLIVLLLYGTGLRVSELCNLKIEDINFEKGFLTVRGGKGGKDRTIPIPQPLLTEIKNYLRRRTDDSPYLFVESRRKNKEKLSPKTVWRILKEYGRKAGIKVTPHQLRHSFATHMLERGIDIRIIQELLGHASLSTTQIYTRVTAKHLKEAVERANLLENLIGGE.

The region spanning 5-82 is the Core-binding (CB) domain; it reads TLRSEVLEEF…ALKAYFKFEG (78 aa). A Tyr recombinase domain is found at 98–274; the sequence is TLPKSLTEEE…TAKHLKEAVE (177 aa). Active-site residues include Arg-135, Lys-160, His-226, Arg-229, and His-252. Tyr-261 acts as the O-(3'-phospho-DNA)-tyrosine intermediate in catalysis.

It belongs to the 'phage' integrase family. XerA subfamily.

Its subcellular location is the cytoplasm. Site-specific tyrosine recombinase, which acts by catalyzing the cutting and rejoining of the recombining DNA molecules. The chain is Tyrosine recombinase XerA from Pyrococcus furiosus (strain ATCC 43587 / DSM 3638 / JCM 8422 / Vc1).